Consider the following 498-residue polypeptide: ATP synthase subunit beta, chloroplastic (498 aa).

Residue 172 to 179 (GGAGVGKT) participates in ATP binding.

Belongs to the ATPase alpha/beta chains family. In terms of assembly, F-type ATPases have 2 components, CF(1) - the catalytic core - and CF(0) - the membrane proton channel. CF(1) has five subunits: alpha(3), beta(3), gamma(1), delta(1), epsilon(1). CF(0) has four main subunits: a(1), b(1), b'(1) and c(9-12).

The protein localises to the plastid. Its subcellular location is the chloroplast thylakoid membrane. It catalyses the reaction ATP + H2O + 4 H(+)(in) = ADP + phosphate + 5 H(+)(out). Its function is as follows. Produces ATP from ADP in the presence of a proton gradient across the membrane. The catalytic sites are hosted primarily by the beta subunits. The polypeptide is ATP synthase subunit beta, chloroplastic (Salacca zalacca (Snake palm)).